Here is a 305-residue protein sequence, read N- to C-terminus: Pseudouridine-5'-phosphate glycosidase (305 aa).

E22 (proton donor) is an active-site residue. Positions 84 and 104 each coordinate substrate. D136 contributes to the Mn(2+) binding site. 138–140 (SAD) contributes to the substrate binding site. K157 (nucleophile) is an active-site residue.

It belongs to the pseudouridine-5'-phosphate glycosidase family. Homotrimer. Mn(2+) serves as cofactor.

It catalyses the reaction D-ribose 5-phosphate + uracil = psi-UMP + H2O. In terms of biological role, catalyzes the reversible cleavage of pseudouridine 5'-phosphate (PsiMP) to ribose 5-phosphate and uracil. Functions biologically in the cleavage direction, as part of a pseudouridine degradation pathway. This chain is Pseudouridine-5'-phosphate glycosidase, found in Chloroflexus aurantiacus (strain ATCC 29364 / DSM 637 / Y-400-fl).